A 457-amino-acid chain; its full sequence is Putative methyltransferase MT1451 (457 aa).

S-adenosyl-L-methionine-binding positions include 276-282, glutamate 301, aspartate 325, and aspartate 341; that span reads CAGPGGK. The active-site Nucleophile is the cysteine 394.

It belongs to the class I-like SAM-binding methyltransferase superfamily. RsmB/NOP family.

May act as RNA methyltransferase. This is Putative methyltransferase MT1451 from Mycobacterium tuberculosis (strain CDC 1551 / Oshkosh).